Here is a 417-residue protein sequence, read N- to C-terminus: Laccase-like protein claX (417 aa).

The protein belongs to the multicopper oxidase family.

Laccase-like protein; part of the gene cluster that mediates the biosynthesis of clavilactone A, a meroterpenoid that features a unique benzo-fused ten-membered carbocyclic ring unit with an alpha,beta-epoxy-gamma-lactone moiety, forming an intriguing 10/5/3 tricyclic nested skeleton. ClaR, ClaS and ClaT are sufficient to produce clavilactone A and the function of claX, if any, has still to be identified. The biosynthesis begins with the prenyltransferase claS that transfers geranyl pyrophosphate (GPP) to hydroquinone to produces geranylhydroquinon. The cytochrome P450 monooxygenase claR then catalyzes the diradical coupling reaction between the intramolecular hydroquinone and allyl moieties to form the benzo-fused ten-membered carbocyclic ring unit of wigantol. Finally the cytochrome P450 monooxygenase claT exquisitely and stereoselectively assembles the alpha,beta-epoxy-gamma-lactone moiety, producing clavilactone A via arnebinol A. The chain is Laccase-like protein claX from Ampulloclitocybe clavipes (Club foot).